The chain runs to 584 residues: Actin-binding protein IPP (584 aa).

The 68-residue stretch at C37–V104 folds into the BTB domain. 6 Kelch repeats span residues Y289–G343, M344–G390, A391–G437, I439–D485, I487–G533, and L535–V583.

It is found in the cytoplasm. The protein resides in the cytoskeleton. In terms of biological role, may play a role in organizing the actin cytoskeleton. The sequence is that of Actin-binding protein IPP (IPP) from Homo sapiens (Human).